We begin with the raw amino-acid sequence, 267 residues long: Collectin-11 (267 aa).

The N-terminal stretch at 1–21 (MKRALALMGLAFLCVLRAGAA) is a signal peptide. Residues 40 to 109 (GDAGEKGDKG…GPNGEPGIPC (70 aa)) are disordered. 2 stretches are compositionally biased toward basic and acidic residues: residues 41–50 (DAGEKGDKGA) and 62–71 (EKGDVGDKGQ). The region spanning 49-108 (GAPGRPGRVGPTGEKGDVGDKGQKGGVGRHGKIGPIGSKGEKGDSGDIGPPGPNGEPGIP) is the Collagen-like domain. Residues 110-144 (ECSQLRKAIGEMDNQVTQLTAELKFIKNAVAGVRE) adopt a coiled-coil conformation. In terms of domain architecture, C-type lectin spans 145–261 (TEQKMYLLVK…CHLTMHFLCE (117 aa)). 2 disulfide bridges follow: C166/C260 and C238/C252. An a carbohydrate-binding site is contributed by R196. Ca(2+)-binding residues include D203, E207, E228, N230, N231, D234, E236, and D237. E236 contributes to the a carbohydrate binding site. A carbohydrate contacts are provided by residues E240 and 248 to 250 (NDV). Residues N248 and D249 each coordinate Ca(2+).

The protein belongs to the COLEC10/COLEC11 family. As to quaternary structure, homotrimer; disulfide-linked. Interacts with MASP1; probably triggers the lectin pathway of complement.

Its subcellular location is the secreted. Functionally, lectin that plays a role in innate immunity, apoptosis and embryogenesis. Calcium-dependent lectin that binds self and non-self glycoproteins presenting high mannose oligosaccharides with at least one terminal alpha-1,2-linked mannose epitope. Primarily recognizes the terminal disaccharide of the glycan. Also recognizes a subset of fucosylated glycans and lipopolysaccharides. Plays a role in innate immunity through its ability to bind non-self sugars presented by microorganisms and to activate the complement through the recruitment of MAPS1. Also plays a role in apoptosis through its ability to bind in a calcium-independent manner the DNA present at the surface of apoptotic cells and to activate the complement in response to this binding. Finally, plays a role in development, probably serving as a guidance cue during the migration of neural crest cells and other cell types during embryogenesis. In Bos taurus (Bovine), this protein is Collectin-11 (COLEC11).